We begin with the raw amino-acid sequence, 239 residues long: Putative antitoxin VapB45 (239 aa).

Functionally, possibly the antitoxin component of a type II toxin-antitoxin (TA) system. Its cognate toxin is VapC45. In Mycobacterium tuberculosis (strain ATCC 25618 / H37Rv), this protein is Putative antitoxin VapB45.